We begin with the raw amino-acid sequence, 144 residues long: Transcriptional regulator SlyA (144 aa).

An HTH marR-type domain is found at 2–135; that stretch reads ESPLGSDLAR…LITLIAKLEH (134 aa). The segment at residues 49-72 is a DNA-binding region (H-T-H motif); the sequence is QIQLAKAIGIEQPSLVRTLDQLEE.

It belongs to the SlyA family. As to quaternary structure, homodimer.

Transcription regulator that can specifically activate or repress expression of target genes. In Escherichia coli (strain 55989 / EAEC), this protein is Transcriptional regulator SlyA.